Reading from the N-terminus, the 430-residue chain is DNA-binding protein cre-1 (430 aa).

The span at 1-19 (MQRVQSAVDFSNLLNPSES) shows a compositional bias: polar residues. Disordered regions lie at residues 1 to 77 (MQRV…LPRP), 97 to 187 (IRTH…PHSY), 265 to 340 (SRSH…RNLS), and 357 to 430 (LDGQ…MDRL). Low complexity predominate over residues 30–46 (PRQQTAQPQQQQQQPQP). C2H2-type zinc fingers lie at residues 78–100 (YKCP…IRTH) and 106–130 (HACQ…SRIH). A compositionally biased stretch (basic and acidic residues) spans 97–106 (IRTHTGEKPH). Polar residues-rich tracts occupy residues 130-147 (HSNP…QQQH) and 175-187 (AMSS…PHSY). Basic and acidic residues predominate over residues 268 to 277 (HSHEDHDDHY). The segment covering 289-303 (PNSPNSTAPSSPTFS) has biased composition (low complexity). The segment covering 412 to 422 (SVRNSSSTSLS) has biased composition (polar residues).

The protein belongs to the creA/MIG C2H2-type zinc-finger protein family.

The protein resides in the nucleus. Functionally, involved in carbon catabolite repression. Represses the transcription of a number of genes by binding to a GC-rich region in their promoter. The protein is DNA-binding protein cre-1 (cre-1) of Neurospora crassa (strain ATCC 24698 / 74-OR23-1A / CBS 708.71 / DSM 1257 / FGSC 987).